A 951-amino-acid polypeptide reads, in one-letter code: Bifunctional glutamine synthetase adenylyltransferase/adenylyl-removing enzyme (951 aa).

Positions 1–445 (MSILPLPALP…VFDELIGDDA (445 aa)) are adenylyl removase. Residues 454 to 951 (HSSYSSLWQD…VSWNKWLMGA (498 aa)) are adenylyl transferase.

Belongs to the GlnE family. It depends on Mg(2+) as a cofactor.

The catalysed reaction is [glutamine synthetase]-O(4)-(5'-adenylyl)-L-tyrosine + phosphate = [glutamine synthetase]-L-tyrosine + ADP. The enzyme catalyses [glutamine synthetase]-L-tyrosine + ATP = [glutamine synthetase]-O(4)-(5'-adenylyl)-L-tyrosine + diphosphate. In terms of biological role, involved in the regulation of glutamine synthetase GlnA, a key enzyme in the process to assimilate ammonia. When cellular nitrogen levels are high, the C-terminal adenylyl transferase (AT) inactivates GlnA by covalent transfer of an adenylyl group from ATP to specific tyrosine residue of GlnA, thus reducing its activity. Conversely, when nitrogen levels are low, the N-terminal adenylyl removase (AR) activates GlnA by removing the adenylyl group by phosphorolysis, increasing its activity. The regulatory region of GlnE binds the signal transduction protein PII (GlnB) which indicates the nitrogen status of the cell. This Pectobacterium atrosepticum (strain SCRI 1043 / ATCC BAA-672) (Erwinia carotovora subsp. atroseptica) protein is Bifunctional glutamine synthetase adenylyltransferase/adenylyl-removing enzyme.